A 199-amino-acid chain; its full sequence is Thymidine kinase (199 aa).

ATP contacts are provided by residues G9 to S16 and D93 to Q96. E94 serves as the catalytic Proton acceptor. Zn(2+) is bound by residues C151, C154, C188, and H191.

It belongs to the thymidine kinase family. As to quaternary structure, homotetramer.

The protein localises to the cytoplasm. The enzyme catalyses thymidine + ATP = dTMP + ADP + H(+). In Lactobacillus johnsonii (strain CNCM I-12250 / La1 / NCC 533), this protein is Thymidine kinase.